Here is a 460-residue protein sequence, read N- to C-terminus: Signal recognition particle 54 kDa protein (460 aa).

GTP is bound by residues 104–111, 184–188, and 242–245; these read GLQGSGKT, DTAGR, and TKLD.

Belongs to the GTP-binding SRP family. SRP54 subfamily. In terms of assembly, part of the signal recognition particle protein translocation system, which is composed of SRP and FtsY. Archaeal SRP consists of a 7S RNA molecule of 300 nucleotides and two protein subunits: SRP54 and SRP19.

It is found in the cytoplasm. It carries out the reaction GTP + H2O = GDP + phosphate + H(+). Involved in targeting and insertion of nascent membrane proteins into the cytoplasmic membrane. Binds to the hydrophobic signal sequence of the ribosome-nascent chain (RNC) as it emerges from the ribosomes. The SRP-RNC complex is then targeted to the cytoplasmic membrane where it interacts with the SRP receptor FtsY. The protein is Signal recognition particle 54 kDa protein of Halobacterium salinarum (strain ATCC 29341 / DSM 671 / R1).